Consider the following 161-residue polypeptide: MATMSLAAASPLASIPRGIAAQAPCAAFLSIRLGGATATRFAGLAVASQPAERRAAAMVAMAKREQELEEIRAMTTEQMEEEVVDLKGELFLLRLKRSARQEFKNSEFSRMRKRIARMLTVKREREIEQGINKRLSRKLDRKWKQSIVVRPPPSLRGNKEE.

Residues 1–61 (MATMSLAAAS…ERRAAAMVAM (61 aa)) constitute a chloroplast transit peptide.

Belongs to the universal ribosomal protein uL29 family. As to quaternary structure, part of the 50S ribosomal subunit.

Its subcellular location is the plastid. It localises to the chloroplast. This chain is Large ribosomal subunit protein uL29c (RPL29), found in Zea mays (Maize).